Here is a 738-residue protein sequence, read N- to C-terminus: Squalene hopane cyclase afumA (738 aa).

2 PFTB repeats span residues 132 to 173 (GSQY…RIIG) and 321 to 361 (RRRC…KLHD). Asp460 serves as the catalytic Proton donor. PFTB repeat units follow at residues 482–523 (VRDA…ESLC), 581–621 (CARA…QYFK), and 634–675 (AARA…SQTA).

Belongs to the terpene cyclase/mutase family.

The protein operates within secondary metabolite biosynthesis. In terms of biological role, squalene hopane cyclase; part of the gene cluster that mediates the biosynthesis fumihopaside A, a hopane-type glucoside that enhances the thermotolerance and UV resistance of N.fumigata. The first step of fumihopaside A biosynthesis is performed by the squalene hopane cyclase afumA that catalyzes the cyclization of 3S-oxidosqualene into the hopene 21-beta-H-hopane-3-beta,22-diol. The cytochrome P450 monooxygenase afumB is responsible for both hydroxylation at C-24 and oxidations at C-30 of the afumA product. The glycosyltransferase afumC then catalyzes the glycosylation at C-24, using UDP-D-glucose as a donor, to produce fumihopaside A. AfumC is also able to accept UDP-D-galactose and UDP-D-glucuronic acid as donors to yield minor derivatives. Fumihopaside B, another minor derivative produced, is different from fumihopaside A due to the presence of a double bond between C-22 and C-29. The polypeptide is Squalene hopane cyclase afumA (Aspergillus fumigatus (strain CBS 144.89 / FGSC A1163 / CEA10) (Neosartorya fumigata)).